Consider the following 345-residue polypeptide: 4-hydroxyproline 2-epimerase (345 aa).

Q85 provides a ligand contact to substrate. The active-site Proton acceptor is S93. Substrate-binding positions include 94–95 (GS) and D251. The Proton donor role is filled by C255. 256–257 (GT) contacts substrate.

It belongs to the proline racemase family.

It carries out the reaction trans-4-hydroxy-L-proline = cis-4-hydroxy-D-proline. Its function is as follows. Catalyzes the epimerization of trans-4-hydroxy-L-proline (t4LHyp) to cis-4-hydroxy-D-proline (c4DHyp). May be involved in a degradation pathway of t4LHyp. Can also catalyze the epimerization of trans-3-hydroxy-L-proline (t3LHyp) to cis-3-hydroxy-D-proline (c3DHyp) in vitro, albeit with 2-fold lower efficiency. Displays no proline racemase activity. In Rhizobium etli (strain ATCC 51251 / DSM 11541 / JCM 21823 / NBRC 15573 / CFN 42), this protein is 4-hydroxyproline 2-epimerase.